A 303-amino-acid chain; its full sequence is Cytosolic-abundant heat soluble protein 3 (303 aa).

Low complexity predominate over residues 1–19 (MSSRQNQQSSSQHSSSSQQ). Residues 1 to 67 (MSSRQNQQSS…PGSHSEVHEE (67 aa)) form a disordered region. Residues 170-257 (ARQDEQDAGM…ESAKAQTNVN (88 aa)) are a coiled coil. CAHS motif regions lie at residues 184 to 202 (YREE…LERQ) and 221 to 239 (QERE…LELE). Over residues 270-280 (KGAIQTSADKS) the composition is skewed to polar residues. The tract at residues 270–303 (KGAIQTSADKSSTTKTGPTTVTQIKHTEQHTERR) is disordered. Low complexity predominate over residues 282–291 (TTKTGPTTVT). Positions 294 to 303 (KHTEQHTERR) are enriched in basic and acidic residues.

The protein belongs to the Cytosolic-abundant heat soluble protein (CAHS) family.

It is found in the cytoplasm. CAHS proteins are cytosolic heat soluble proteins that seem to contribute to the anhydrobiosis in tardigrades, but their specific mechanisms are yet to be identified. It is possible that protection during anhydrobiosis might occur via the stabilization of vitrifying small molecules such as sugars, but not via the direct glass transition of CAHS proteins themselves. This is Cytosolic-abundant heat soluble protein 3 from Ramazzottius varieornatus (Water bear).